The primary structure comprises 305 residues: Mas-related G-protein coupled receptor member A2B (305 aa).

Residues 1-17 lie on the Extracellular side of the membrane; the sequence is MDETLPGSINIRILIPK. A helical membrane pass occupies residues 18–38; sequence LMIIIFGLVGLMGNAIVFWLL. The Cytoplasmic segment spans residues 39–53; it reads GFHLRRNAFSVYILN. A helical membrane pass occupies residues 54–74; that stretch reads LALADFLFLLSSIIASTLFLL. Over 75 to 78 the chain is Extracellular; the sequence is KVSY. Residues 79 to 99 traverse the membrane as a helical segment; sequence LSIIFHLCFNTIMMVVYITGI. Over 100–132 the chain is Cytoplasmic; it reads SMLSAISTECCLSVLCPTWYRCHRPVHTSTVMC. The chain crosses the membrane as a helical span at residues 133-153; it reads AVIWVLSLLICILNSYFCAVL. Residues 154–167 are Extracellular-facing; the sequence is HTRYDNDNECLATN. The helical transmembrane segment at 168-188 threads the bilayer; that stretch reads IFTASYMIFLLVVLCLSSLAL. Topologically, residues 189–207 are cytoplasmic; the sequence is LARLFCGAGQMKLTRFHVT. The chain crosses the membrane as a helical span at residues 208 to 228; sequence ILLTLLVFLLCGLPFVIYCIL. Residues 229–244 lie on the Extracellular side of the membrane; the sequence is LFKIKDDFHVLDVNFY. A helical membrane pass occupies residues 245 to 265; it reads LALEVLTAINSCANPIIYFFV. Topologically, residues 266 to 305 are cytoplasmic; that stretch reads GSFRHQLKHQTLKMVLQSALQDTPETAENMVEMSSNKAEP.

Belongs to the G-protein coupled receptor 1 family. Mas subfamily. In terms of tissue distribution, expressed in a subset of sensory neurons that includes nociceptors. Expressed in the subclass of non-peptidergic sensory neurons that are IB4(+) and VR1(-).

It localises to the cell membrane. Orphan receptor. May be a receptor for RFamide-family neuropeptides such as NPFF and NPAF, which are analgesic in vivo. May regulate nociceptor function and/or development, including the sensation or modulation of pain. The protein is Mas-related G-protein coupled receptor member A2B of Mus musculus (Mouse).